A 324-amino-acid chain; its full sequence is Methenyltetrahydromethanopterin cyclohydrolase (324 aa).

It belongs to the MCH family.

The protein localises to the cytoplasm. It catalyses the reaction 5,10-methenyl-5,6,7,8-tetrahydromethanopterin + H2O = N(5)-formyl-5,6,7,8-tetrahydromethanopterin + H(+). It functions in the pathway one-carbon metabolism; formaldehyde degradation; formate from formaldehyde (H(4)MPT route): step 3/5. Its function is as follows. Catalyzes the hydrolysis of methenyl-H(4)MPT(+) to 5-formyl-H(4)MPT. In Methylobacterium sp. (strain 4-46), this protein is Methenyltetrahydromethanopterin cyclohydrolase.